The primary structure comprises 930 residues: Protocadherin gamma-B6 (930 aa).

Residues 1–30 (MGGSCAQRRRAGPRQVLFPLLLPFFYPTLC) form the signal peptide. Cadherin domains are found at residues 31 to 133 (EPIR…APQF), 134 to 242 (DKKE…PPVF), 243 to 347 (SRDE…SPEI), 348 to 452 (IITS…APVF), 453 to 562 (DQTS…APRV), and 570 to 675 (DGSA…LPDL). At 31–691 (EPIRYSIPEE…SDPQAELQFY (661 aa)) the chain is on the extracellular side. Asn-304, Asn-419, and Asn-545 each carry an N-linked (GlcNAc...) asparagine glycan. Residues 692-712 (LVVALALISVLFLLAVILAIA) traverse the membrane as a helical segment. The Cytoplasmic segment spans residues 713–930 (LRLRRSLSPT…KKKSGKKEKK (218 aa)). Disordered regions lie at residues 791 to 839 (PHGG…WPNN) and 900 to 930 (ATLTNAAGKRDGKAPAGGNGNKKKSGKKEKK). The segment covering 800-839 (HPETLTSQAPPNTDWRFSQAQRPGTSGSQNGDDTGTWPNN) has biased composition (polar residues). Positions 920-930 (NKKKSGKKEKK) are enriched in basic residues.

The protein localises to the cell membrane. Its function is as follows. Potential calcium-dependent cell-adhesion protein. May be involved in the establishment and maintenance of specific neuronal connections in the brain. The protein is Protocadherin gamma-B6 (PCDHGB6) of Pan troglodytes (Chimpanzee).